A 176-amino-acid polypeptide reads, in one-letter code: Inner membrane-spanning protein YciB (176 aa).

Helical transmembrane passes span 24-44, 49-69, 76-96, 119-139, and 149-169; these read TATAVAIVATLVQIAWVAFRH, PMLWVSLGVVTVFGGATLVLH, WKPTVLYWAFSVALIVSQLAF, LSVVWAIFFVLLGLVNLFVAY, and FKLFGATGCLVVFIVGQSLWL.

The protein belongs to the YciB family.

The protein localises to the cell inner membrane. Functionally, plays a role in cell envelope biogenesis, maintenance of cell envelope integrity and membrane homeostasis. This Paraburkholderia phytofirmans (strain DSM 17436 / LMG 22146 / PsJN) (Burkholderia phytofirmans) protein is Inner membrane-spanning protein YciB.